We begin with the raw amino-acid sequence, 642 residues long: Capsid vertex component 2 (642 aa).

The tract at residues 1–48 (MSLLHTFWRLPVAVFFEPHEENVLRCPERVLRRLLEDAAVTMRGGGWR) is interaction with major capsid protein/MCP. A disordered region spans residues 97–125 (DEGPSPRTLLQPPCRPRSSSPGTGVAGAS).

Belongs to the herpesviridae CVC2 protein family. As to quaternary structure, heterodimerizes with CVC1. Interacts with major capsid protein/MCP and triplex capsid protein 1/TRX1 at the pentamer vertices. Interacts with the large tegument protein/LTP.

The protein localises to the virion. Its subcellular location is the host nucleus. Capsid vertex-specific component that plays a role during viral DNA encapsidation, assuring correct genome cleavage and presumably stabilizing capsids that contain full-length viral genomes. Participates in the interaction between the capsid and the tegument through interaction with the large tegument protein/LTP. This Homo sapiens (Human) protein is Capsid vertex component 2.